Consider the following 332-residue polypeptide: Glycerol-3-phosphate dehydrogenase [NAD(P)+] (332 aa).

The NADPH site is built by Trp11, Arg30, and Lys108. Sn-glycerol 3-phosphate is bound by residues Lys108, Gly137, and Ser139. NADPH is bound at residue Ala141. Sn-glycerol 3-phosphate contacts are provided by Lys192, Asp245, Ser255, Arg256, and Asn257. Lys192 functions as the Proton acceptor in the catalytic mechanism. Arg256 is a binding site for NADPH. Positions 280 and 282 each coordinate NADPH.

This sequence belongs to the NAD-dependent glycerol-3-phosphate dehydrogenase family.

The protein resides in the cytoplasm. The catalysed reaction is sn-glycerol 3-phosphate + NAD(+) = dihydroxyacetone phosphate + NADH + H(+). It carries out the reaction sn-glycerol 3-phosphate + NADP(+) = dihydroxyacetone phosphate + NADPH + H(+). The protein operates within membrane lipid metabolism; glycerophospholipid metabolism. Its function is as follows. Catalyzes the reduction of the glycolytic intermediate dihydroxyacetone phosphate (DHAP) to sn-glycerol 3-phosphate (G3P), the key precursor for phospholipid synthesis. The chain is Glycerol-3-phosphate dehydrogenase [NAD(P)+] from Burkholderia lata (strain ATCC 17760 / DSM 23089 / LMG 22485 / NCIMB 9086 / R18194 / 383).